A 174-amino-acid polypeptide reads, in one-letter code: Protein C2-DOMAIN ABA-RELATED 2 (174 aa).

N-acetylmethionine is present on M1. The C2 domain occupies 1–104 (MENMLGLLRL…EAIRIQNQLG (104 aa)). Residues R21, D22, D27, D73, R74, D75, and D81 each contribute to the Ca(2+) site.

The protein belongs to the plant CAR protein family. Binds to PYR/PYL/RCAR abscisic acid intracellular receptors in an ABA-independent manner, both at the plasma membrane and in the nucleus. The cofactor is Ca(2+).

The protein localises to the cell membrane. It localises to the nucleus. Stimulates the GTPase/ATPase activities of Obg-like ATPases. Mediates the transient calcium-dependent interaction of PYR/PYL/RCAR abscisic acid (ABA) receptors with the plasma membrane and thus regulates ABA sensitivity. The chain is Protein C2-DOMAIN ABA-RELATED 2 from Arabidopsis thaliana (Mouse-ear cress).